A 190-amino-acid polypeptide reads, in one-letter code: Potassium-transporting ATPase KdpC subunit (190 aa).

The chain crosses the membrane as a helical span at residues 11-31; it reads LIVLMSLITGVAYPLVVTGVA.

It belongs to the KdpC family. The system is composed of three essential subunits: KdpA, KdpB and KdpC.

The protein localises to the cell inner membrane. Its function is as follows. Part of the high-affinity ATP-driven potassium transport (or Kdp) system, which catalyzes the hydrolysis of ATP coupled with the electrogenic transport of potassium into the cytoplasm. This subunit acts as a catalytic chaperone that increases the ATP-binding affinity of the ATP-hydrolyzing subunit KdpB by the formation of a transient KdpB/KdpC/ATP ternary complex. The chain is Potassium-transporting ATPase KdpC subunit from Pseudomonas savastanoi pv. phaseolicola (strain 1448A / Race 6) (Pseudomonas syringae pv. phaseolicola (strain 1448A / Race 6)).